The chain runs to 265 residues: Protein Rv2993c (265 aa).

A divalent metal cation contacts are provided by Glu114, Glu116, and Asp145.

In the C-terminal section; belongs to the FAH family. A divalent metal cation serves as cofactor.

This is Protein Rv2993c from Mycobacterium tuberculosis (strain ATCC 25618 / H37Rv).